We begin with the raw amino-acid sequence, 158 residues long: Hypoxanthine DNA glycosylase (158 aa).

Asn-39 is an active-site residue.

This sequence belongs to the uracil-DNA glycosylase (UDG) superfamily. Type 6 (HDG) family.

Functionally, excises hypoxanthine, a deamination product of adenine, from double-stranded DNA. Acts on double-stranded DNA containing G/I, T/I, A/I and C/I base pairs, but not on single-stranded inosine-containing DNA. Also has minor xanthine DNA glycosylase activity. Lacks any detectable uracil-DNA glycosylase activity. In Methanosarcina acetivorans (strain ATCC 35395 / DSM 2834 / JCM 12185 / C2A), this protein is Hypoxanthine DNA glycosylase.